Reading from the N-terminus, the 287-residue chain is Bifunctional protein FolD (287 aa).

NADP(+)-binding positions include 165 to 167 (GRS), S190, and I231.

This sequence belongs to the tetrahydrofolate dehydrogenase/cyclohydrolase family. As to quaternary structure, homodimer.

The enzyme catalyses (6R)-5,10-methylene-5,6,7,8-tetrahydrofolate + NADP(+) = (6R)-5,10-methenyltetrahydrofolate + NADPH. It carries out the reaction (6R)-5,10-methenyltetrahydrofolate + H2O = (6R)-10-formyltetrahydrofolate + H(+). Its pathway is one-carbon metabolism; tetrahydrofolate interconversion. Functionally, catalyzes the oxidation of 5,10-methylenetetrahydrofolate to 5,10-methenyltetrahydrofolate and then the hydrolysis of 5,10-methenyltetrahydrofolate to 10-formyltetrahydrofolate. This Trichodesmium erythraeum (strain IMS101) protein is Bifunctional protein FolD.